A 686-amino-acid polypeptide reads, in one-letter code: DNA gyrase subunit B (686 aa).

Over residues 1–27 (MADSGNPNENNPSTDTGVNDAVSTSHG) the composition is skewed to polar residues. Residues 1 to 29 (MADSGNPNENNPSTDTGVNDAVSTSHGDA) are disordered. A Toprim domain is found at 465–579 (CEIFIVEGDS…SGHVYLSRPP (115 aa)). Residues Glu471, Asp544, and Asp546 each coordinate Mg(2+).

It belongs to the type II topoisomerase GyrB family. In terms of assembly, heterotetramer, composed of two GyrA and two GyrB chains. In the heterotetramer, GyrA contains the active site tyrosine that forms a transient covalent intermediate with DNA, while GyrB binds cofactors and catalyzes ATP hydrolysis. Mg(2+) is required as a cofactor. The cofactor is Mn(2+). Ca(2+) serves as cofactor.

Its subcellular location is the cytoplasm. The catalysed reaction is ATP-dependent breakage, passage and rejoining of double-stranded DNA.. Its function is as follows. A type II topoisomerase that negatively supercoils closed circular double-stranded (ds) DNA in an ATP-dependent manner to modulate DNA topology and maintain chromosomes in an underwound state. Negative supercoiling favors strand separation, and DNA replication, transcription, recombination and repair, all of which involve strand separation. Also able to catalyze the interconversion of other topological isomers of dsDNA rings, including catenanes and knotted rings. Type II topoisomerases break and join 2 DNA strands simultaneously in an ATP-dependent manner. This chain is DNA gyrase subunit B, found in Streptomyces coelicolor (strain ATCC BAA-471 / A3(2) / M145).